The following is a 560-amino-acid chain: MKVWMAILISILCWQSSVWAVCPAWSPARAQEEISRLQQQIKQWDDDYWKEGKSEVEDGVYDQLSARLTQWQRCFGSEPRDVMMPPLNGAVMHPVAHTGVRKMVDKNALSLWMRERSDLWVQPKVDGVAVTLVYRDGKLNKAISRGNGLKGEDWTQKVSLISAVPQTVSGPLANSTLQGEIFLQREGHIQQQMGGINARAKVAGLMMRQGNSDTLNSLAVFVWAWPDGPQLMTDRLKELATAGFTLTQRYTRAVKNADEIARVRNEWWKAKLPFVTDGVVVRAAKEPESRHWLPGQAEWLVAWKYQPVAQVAEVKAIQFAVGKSGKISVVASLAPVMLDDKKVQRVNIGSVRRWQEWDIAPGDQILVSLAGQGIPRIDDVVWRGAERTKPTPPENRFNSLTCYFASDVCQEQFISRLVWLGSKQVLGLDGIGEAGWRALHQTHRFEHIFSWLLLTPEQLQNTPGIAKSKSAQLWHQFNLARKQPFTRWVMAMGIPLTRAALNASDERSWSQLLFSTEQFWQRLPGTGSGRARQVIEWKENAQIKKLGSWLAAQQITGFEP.

Lys124 acts as the N6-AMP-lysine intermediate in catalysis.

It belongs to the NAD-dependent DNA ligase family. LigB subfamily.

The catalysed reaction is NAD(+) + (deoxyribonucleotide)n-3'-hydroxyl + 5'-phospho-(deoxyribonucleotide)m = (deoxyribonucleotide)n+m + AMP + beta-nicotinamide D-nucleotide.. Functionally, catalyzes the formation of phosphodiester linkages between 5'-phosphoryl and 3'-hydroxyl groups in double-stranded DNA using NAD as a coenzyme and as the energy source for the reaction. In Shigella sonnei (strain Ss046), this protein is DNA ligase B.